The chain runs to 293 residues: AA9 family lytic polysaccharide monooxygenase E (293 aa).

A signal peptide spans 1–19 (MKGLLSVAALSLAVSEVSA). Cu(2+) is bound by residues H20 and H90. C59 and C172 are joined by a disulfide. H158 and Q167 together coordinate O2. Y169 is a binding site for Cu(2+). One can recognise a CBM1 domain in the interval 257 to 293 (CAVAKWGQCGGNGWTGCTTCAAGSTCNTQNAYYHQCV).

This sequence belongs to the polysaccharide monooxygenase AA9 family. Cu(2+) serves as cofactor.

The protein resides in the secreted. The catalysed reaction is [(1-&gt;4)-beta-D-glucosyl]n+m + reduced acceptor + O2 = 4-dehydro-beta-D-glucosyl-[(1-&gt;4)-beta-D-glucosyl]n-1 + [(1-&gt;4)-beta-D-glucosyl]m + acceptor + H2O.. Its activity is regulated as follows. Glucose dehydrogenase and aryl-alcohol quinone oxidoreductases regulate the oxidative degradation of cellulose since they can act as catalytically efficient electron donors for LPMO9E. Lytic polysaccharide monooxygenase (LPMO) that depolymerizes crystalline and amorphous polysaccharides via the oxidation of scissile alpha- or beta-(1-4)-glycosidic bonds, yielding only C1 oxidation products. Catalysis by LPMOs requires the reduction of the active-site copper from Cu(II) to Cu(I) by a reducing agent and H(2)O(2) or O(2) as a cosubstrate. Improves the progression of lytic enzymes in delignified miscanthus cell walls. This boosting effect dependents on the cellular type which indicates contrasted recalcitrance levels in plant tissues. The polypeptide is AA9 family lytic polysaccharide monooxygenase E (Podospora anserina (strain S / ATCC MYA-4624 / DSM 980 / FGSC 10383) (Pleurage anserina)).